The following is a 437-amino-acid chain: Chaperone SurA (437 aa).

Residues 1–22 (MKNWKFPLISTLLLLLTINVHA) form the signal peptide. 2 consecutive PpiC domains span residues 173–274 (TVQY…KIDD) and 283–383 (VTEV…EVLE).

It is found in the periplasm. The catalysed reaction is [protein]-peptidylproline (omega=180) = [protein]-peptidylproline (omega=0). Chaperone involved in the correct folding and assembly of outer membrane proteins. Recognizes specific patterns of aromatic residues and the orientation of their side chains, which are found more frequently in integral outer membrane proteins. May act in both early periplasmic and late outer membrane-associated steps of protein maturation. The sequence is that of Chaperone SurA from Aliivibrio fischeri (strain ATCC 700601 / ES114) (Vibrio fischeri).